The primary structure comprises 336 residues: Histidinol-phosphate aminotransferase (336 aa).

N6-(pyridoxal phosphate)lysine is present on lysine 204.

The protein belongs to the class-II pyridoxal-phosphate-dependent aminotransferase family. Histidinol-phosphate aminotransferase subfamily. Requires pyridoxal 5'-phosphate as cofactor.

It catalyses the reaction L-histidinol phosphate + 2-oxoglutarate = 3-(imidazol-4-yl)-2-oxopropyl phosphate + L-glutamate. The protein operates within amino-acid biosynthesis; L-histidine biosynthesis; L-histidine from 5-phospho-alpha-D-ribose 1-diphosphate: step 7/9. The polypeptide is Histidinol-phosphate aminotransferase (Thermococcus kodakarensis (strain ATCC BAA-918 / JCM 12380 / KOD1) (Pyrococcus kodakaraensis (strain KOD1))).